Consider the following 388-residue polypeptide: Succinate--CoA ligase [ADP-forming] subunit beta (388 aa).

The 236-residue stretch at 9 to 244 (KQLFARYGLP…QSQEDPREAQ (236 aa)) folds into the ATP-grasp domain. ATP contacts are provided by residues K46, 53-55 (GRG), E99, T102, and E107. Mg(2+)-binding residues include N199 and D213. Substrate contacts are provided by residues N264 and 321 to 323 (GIV).

It belongs to the succinate/malate CoA ligase beta subunit family. As to quaternary structure, heterotetramer of two alpha and two beta subunits. Requires Mg(2+) as cofactor.

It catalyses the reaction succinate + ATP + CoA = succinyl-CoA + ADP + phosphate. The enzyme catalyses GTP + succinate + CoA = succinyl-CoA + GDP + phosphate. The protein operates within carbohydrate metabolism; tricarboxylic acid cycle; succinate from succinyl-CoA (ligase route): step 1/1. In terms of biological role, succinyl-CoA synthetase functions in the citric acid cycle (TCA), coupling the hydrolysis of succinyl-CoA to the synthesis of either ATP or GTP and thus represents the only step of substrate-level phosphorylation in the TCA. The beta subunit provides nucleotide specificity of the enzyme and binds the substrate succinate, while the binding sites for coenzyme A and phosphate are found in the alpha subunit. The sequence is that of Succinate--CoA ligase [ADP-forming] subunit beta from Shigella dysenteriae serotype 1 (strain Sd197).